Here is a 285-residue protein sequence, read N- to C-terminus: MTSKEDGKAAPGEERRRSPLDHLPPPANSNKPLTPFSIEDILNKPSVRRSYSLCGAAHLLAAADKHAPGGLPLAGRALLSQTSPLCALEELASKTFKGLEVSVLQAAEGRDGMTIFGQRQTPKKRRKSRTAFTNHQIYELEKRFLYQKYLSPADRDQIAQQLGLTNAQVITWFQNRRAKLKRDLEEMKADVESAKKLGPSGQMDIVALAELEQNSEASGGGGGGGGGGCGRAKSRPGSPALPPGAPQAPGGGPLQLSPASPLTDQRASSQDCSEDEEDEEIDVDD.

Residues 1–20 (MTSKEDGKAAPGEERRRSPL) show a composition bias toward basic and acidic residues. The tract at residues 1 to 36 (MTSKEDGKAAPGEERRRSPLDHLPPPANSNKPLTPF) is disordered. The homeobox DNA-binding region spans 125–184 (RRKSRTAFTNHQIYELEKRFLYQKYLSPADRDQIAQQLGLTNAQVITWFQNRRAKLKRDL). A disordered region spans residues 212–285 (EQNSEASGGG…EEDEEIDVDD (74 aa)). Residues 218-230 (SGGGGGGGGGGCG) show a composition bias toward gly residues. Residues 272–285 (CSEDEEDEEIDVDD) show a composition bias toward acidic residues.

As to quaternary structure, interacts with SKOR1 which acts as a transcriptional corepressor.

Its subcellular location is the nucleus. Functionally, transcription factor required for the development of GABAergic interneurons in the dorsal horn of the spinal cord and migration and further development of hypaxial muscle precursor cells for limb muscles, diaphragm and hypoglossal cord. In Rattus norvegicus (Rat), this protein is Transcription factor LBX1.